Reading from the N-terminus, the 369-residue chain is Anhydro-N-acetylmuramic acid kinase (369 aa).

Residue 12–19 (GTSMDGVD) coordinates ATP.

This sequence belongs to the anhydro-N-acetylmuramic acid kinase family.

The catalysed reaction is 1,6-anhydro-N-acetyl-beta-muramate + ATP + H2O = N-acetyl-D-muramate 6-phosphate + ADP + H(+). It functions in the pathway amino-sugar metabolism; 1,6-anhydro-N-acetylmuramate degradation. The protein operates within cell wall biogenesis; peptidoglycan recycling. Catalyzes the specific phosphorylation of 1,6-anhydro-N-acetylmuramic acid (anhMurNAc) with the simultaneous cleavage of the 1,6-anhydro ring, generating MurNAc-6-P. Is required for the utilization of anhMurNAc either imported from the medium or derived from its own cell wall murein, and thus plays a role in cell wall recycling. The chain is Anhydro-N-acetylmuramic acid kinase from Shewanella amazonensis (strain ATCC BAA-1098 / SB2B).